Reading from the N-terminus, the 1377-residue chain is ATP-dependent helicase/nuclease subunit A (1377 aa).

Positions 4–478 constitute a UvrD-like helicase ATP-binding domain; it reads TSWTPGQQKV…IDLSKNFRSR (475 aa). 25 to 32 lines the ATP pocket; sequence AAAGSGKT. The 342-residue stretch at 526 to 867 folds into the UvrD-like helicase C-terminal domain; that stretch reads FLFSDTKTEL…RIMSIHKSKG (342 aa). Over residues 1036-1065 the composition is skewed to acidic residues; that stretch reads FEEESDEQSDEERSDEERSDGEQSDGEQSD. Residues 1036–1072 are disordered; sequence FEEESDEQSDEERSDEERSDGEQSDGEQSDGEQPRKD.

Belongs to the helicase family. AddA subfamily. In terms of assembly, heterodimer of AddA and AddB/RexB. Requires Mg(2+) as cofactor.

The catalysed reaction is Couples ATP hydrolysis with the unwinding of duplex DNA by translocating in the 3'-5' direction.. The enzyme catalyses ATP + H2O = ADP + phosphate + H(+). Its function is as follows. The heterodimer acts as both an ATP-dependent DNA helicase and an ATP-dependent, dual-direction single-stranded exonuclease. Recognizes the chi site generating a DNA molecule suitable for the initiation of homologous recombination. The AddA nuclease domain is required for chi fragment generation; this subunit has the helicase and 3' -&gt; 5' nuclease activities. This is ATP-dependent helicase/nuclease subunit A from Lachnoclostridium phytofermentans (strain ATCC 700394 / DSM 18823 / ISDg) (Clostridium phytofermentans).